The primary structure comprises 533 residues: Probable bifunctional tRNA threonylcarbamoyladenosine biosynthesis protein (533 aa).

The segment at 1–329 (MTRVLGIEGT…FRPDEVPVSW (329 aa)) is kae1. Histidine 113 and histidine 117 together coordinate Fe cation. Residues 134–138 (NASGA), aspartate 166, glycine 179, glutamate 183, and asparagine 262 contribute to the L-threonylcarbamoyladenylate site. A Fe cation-binding site is contributed by aspartate 290. The Protein kinase domain occupies 338 to 533 (PVPTDERRQG…REIETRGRYQ (196 aa)). ATP contacts are provided by residues 345 to 352 (RQGAEAVV) and lysine 363. Catalysis depends on aspartate 452, which acts as the Proton acceptor; for kinase activity.

This sequence in the N-terminal section; belongs to the KAE1 / TsaD family. The protein in the C-terminal section; belongs to the protein kinase superfamily. Tyr protein kinase family. BUD32 subfamily. In terms of assembly, component of the KEOPS complex that consists of Kae1, Bud32, Cgi121 and Pcc1; the whole complex dimerizes. It depends on Fe(2+) as a cofactor.

Its subcellular location is the cytoplasm. It carries out the reaction L-seryl-[protein] + ATP = O-phospho-L-seryl-[protein] + ADP + H(+). The enzyme catalyses L-threonyl-[protein] + ATP = O-phospho-L-threonyl-[protein] + ADP + H(+). It catalyses the reaction L-threonylcarbamoyladenylate + adenosine(37) in tRNA = N(6)-L-threonylcarbamoyladenosine(37) in tRNA + AMP + H(+). In terms of biological role, required for the formation of a threonylcarbamoyl group on adenosine at position 37 (t(6)A37) in tRNAs that read codons beginning with adenine. Is a component of the KEOPS complex that is probably involved in the transfer of the threonylcarbamoyl moiety of threonylcarbamoyl-AMP (TC-AMP) to the N6 group of A37. The Kae1 domain likely plays a direct catalytic role in this reaction. The Bud32 domain probably displays kinase activity that regulates Kae1 function. This is Probable bifunctional tRNA threonylcarbamoyladenosine biosynthesis protein from Natronomonas pharaonis (strain ATCC 35678 / DSM 2160 / CIP 103997 / JCM 8858 / NBRC 14720 / NCIMB 2260 / Gabara) (Halobacterium pharaonis).